The primary structure comprises 312 residues: Malate dehydrogenase (312 aa).

NAD(+)-binding positions include 12-17 (GAGFTG) and aspartate 36. Substrate is bound by residues arginine 87 and arginine 93. Residues asparagine 100 and 123 to 125 (LTN) each bind NAD(+). Residue asparagine 125 participates in substrate binding. Residue serine 149 is modified to Phosphoserine. Arginine 156 lines the substrate pocket. Residue histidine 180 is the Proton acceptor of the active site.

It belongs to the LDH/MDH superfamily. MDH type 3 family.

It carries out the reaction (S)-malate + NAD(+) = oxaloacetate + NADH + H(+). Catalyzes the reversible oxidation of malate to oxaloacetate. In Bacillus pumilus (strain SAFR-032), this protein is Malate dehydrogenase.